Consider the following 125-residue polypeptide: Glycine cleavage system H protein (125 aa).

The Lipoyl-binding domain maps to Ser22–Thr104. The residue at position 63 (Lys63) is an N6-lipoyllysine.

This sequence belongs to the GcvH family. In terms of assembly, the glycine cleavage system is composed of four proteins: P, T, L and H. It depends on (R)-lipoate as a cofactor.

Its function is as follows. The glycine cleavage system catalyzes the degradation of glycine. The H protein shuttles the methylamine group of glycine from the P protein to the T protein. Is also involved in protein lipoylation via its role as an octanoyl/lipoyl carrier protein intermediate. The sequence is that of Glycine cleavage system H protein from Listeria innocua serovar 6a (strain ATCC BAA-680 / CLIP 11262).